We begin with the raw amino-acid sequence, 311 residues long: tRNA dimethylallyltransferase (311 aa).

11 to 18 is a binding site for ATP; that stretch reads GPTASGKS. 13–18 serves as a coordination point for substrate; the sequence is TASGKS. Interaction with substrate tRNA regions lie at residues 36 to 39 and 160 to 164; these read DSMQ and QRLIR.

Belongs to the IPP transferase family. In terms of assembly, monomer. Mg(2+) serves as cofactor.

It carries out the reaction adenosine(37) in tRNA + dimethylallyl diphosphate = N(6)-dimethylallyladenosine(37) in tRNA + diphosphate. Functionally, catalyzes the transfer of a dimethylallyl group onto the adenine at position 37 in tRNAs that read codons beginning with uridine, leading to the formation of N6-(dimethylallyl)adenosine (i(6)A). The protein is tRNA dimethylallyltransferase of Rickettsia prowazekii (strain Madrid E).